Reading from the N-terminus, the 315-residue chain is tRNA dimethylallyltransferase (315 aa).

Residue 9 to 16 coordinates ATP; sequence GPTASGKT. 11 to 16 is a binding site for substrate; sequence TASGKT. Interaction with substrate tRNA regions lie at residues 34 to 37 and 158 to 162; these read DSLL and QRIQR.

The protein belongs to the IPP transferase family. As to quaternary structure, monomer. Mg(2+) serves as cofactor.

It carries out the reaction adenosine(37) in tRNA + dimethylallyl diphosphate = N(6)-dimethylallyladenosine(37) in tRNA + diphosphate. Catalyzes the transfer of a dimethylallyl group onto the adenine at position 37 in tRNAs that read codons beginning with uridine, leading to the formation of N6-(dimethylallyl)adenosine (i(6)A). The polypeptide is tRNA dimethylallyltransferase (Acidithiobacillus ferrooxidans (strain ATCC 53993 / BNL-5-31) (Leptospirillum ferrooxidans (ATCC 53993))).